A 398-amino-acid chain; its full sequence is Acetate kinase (398 aa).

Residue Asn-8 participates in Mg(2+) binding. Lys-15 is a binding site for ATP. Position 89 (Arg-89) interacts with substrate. Residue Asp-146 is the Proton donor/acceptor of the active site. Residues 206 to 210 (HIGNG), 283 to 285 (DMR), and 331 to 335 (GMGEN) contribute to the ATP site. Glu-383 is a binding site for Mg(2+).

This sequence belongs to the acetokinase family. Homodimer. Mg(2+) serves as cofactor. It depends on Mn(2+) as a cofactor.

The protein localises to the cytoplasm. The enzyme catalyses acetate + ATP = acetyl phosphate + ADP. The protein operates within metabolic intermediate biosynthesis; acetyl-CoA biosynthesis; acetyl-CoA from acetate: step 1/2. Catalyzes the formation of acetyl phosphate from acetate and ATP. Can also catalyze the reverse reaction. In Streptococcus pyogenes serotype M2 (strain MGAS10270), this protein is Acetate kinase.